The sequence spans 318 residues: Thymidylate synthase (318 aa).

DUMP-binding positions include Arg25 and 180 to 181; that span reads RR. The active-site Nucleophile is Cys200. DUMP is bound by residues 220 to 223, Asn231, and 261 to 263; these read RSGD and HIY. Asp223 serves as a coordination point for (6R)-5,10-methylene-5,6,7,8-tetrahydrofolate. Ala317 provides a ligand contact to (6R)-5,10-methylene-5,6,7,8-tetrahydrofolate.

This sequence belongs to the thymidylate synthase family. Bacterial-type ThyA subfamily. In terms of assembly, homodimer.

The protein resides in the cytoplasm. The catalysed reaction is dUMP + (6R)-5,10-methylene-5,6,7,8-tetrahydrofolate = 7,8-dihydrofolate + dTMP. It participates in pyrimidine metabolism; dTTP biosynthesis. Catalyzes the reductive methylation of 2'-deoxyuridine-5'-monophosphate (dUMP) to 2'-deoxythymidine-5'-monophosphate (dTMP) while utilizing 5,10-methylenetetrahydrofolate (mTHF) as the methyl donor and reductant in the reaction, yielding dihydrofolate (DHF) as a by-product. This enzymatic reaction provides an intracellular de novo source of dTMP, an essential precursor for DNA biosynthesis. This chain is Thymidylate synthase, found in Bacillus cytotoxicus (strain DSM 22905 / CIP 110041 / 391-98 / NVH 391-98).